The primary structure comprises 204 residues: Peptide deformylase (204 aa).

Fe cation contacts are provided by Cys-131 and His-174. Glu-175 is a catalytic residue. His-178 serves as a coordination point for Fe cation.

The protein belongs to the polypeptide deformylase family. The cofactor is Fe(2+).

The catalysed reaction is N-terminal N-formyl-L-methionyl-[peptide] + H2O = N-terminal L-methionyl-[peptide] + formate. In terms of biological role, removes the formyl group from the N-terminal Met of newly synthesized proteins. Requires at least a dipeptide for an efficient rate of reaction. N-terminal L-methionine is a prerequisite for activity but the enzyme has broad specificity at other positions. The chain is Peptide deformylase from Streptococcus pyogenes serotype M49 (strain NZ131).